Here is a 513-residue protein sequence, read N- to C-terminus: ATP synthase subunit alpha (513 aa).

169–176 (GDRQTGKT) is an ATP binding site.

Belongs to the ATPase alpha/beta chains family. As to quaternary structure, F-type ATPases have 2 components, CF(1) - the catalytic core - and CF(0) - the membrane proton channel. CF(1) has five subunits: alpha(3), beta(3), gamma(1), delta(1), epsilon(1). CF(0) has three main subunits: a(1), b(2) and c(9-12). The alpha and beta chains form an alternating ring which encloses part of the gamma chain. CF(1) is attached to CF(0) by a central stalk formed by the gamma and epsilon chains, while a peripheral stalk is formed by the delta and b chains.

The protein localises to the cell inner membrane. It carries out the reaction ATP + H2O + 4 H(+)(in) = ADP + phosphate + 5 H(+)(out). Its function is as follows. Produces ATP from ADP in the presence of a proton gradient across the membrane. The alpha chain is a regulatory subunit. This Yersinia pseudotuberculosis serotype O:1b (strain IP 31758) protein is ATP synthase subunit alpha.